A 241-amino-acid chain; its full sequence is GPI-anchored hemophore RBT5 (241 aa).

The first 20 residues, 1–20, serve as a signal peptide directing secretion; the sequence is MLALSLLSIVSIASAAGVTA. One can recognise a CFEM domain in the interval 26 to 137; it reads NPYTIFPSVA…DALAKAADAA (112 aa). Cystine bridges form between cysteine 54-cysteine 94, cysteine 58-cysteine 89, cysteine 68-cysteine 75, and cysteine 77-cysteine 110. Residue aspartate 72 coordinates heme. Composition is skewed to low complexity over residues 140 to 154 and 163 to 182; these read TTAE…AAET and KETT…PAET. A disordered region spans residues 140–210; sequence TTAESTTAES…SVAQSSSSAA (71 aa). Over residues 183-199 the composition is skewed to basic and acidic residues; sequence SKAEETSKAAETTKAEE. Residues 200 to 210 are compositionally biased toward low complexity; that stretch reads SSVAQSSSSAA. Residue asparagine 221 is the site of GPI-anchor amidated asparagine attachment. A propeptide spans 222–241 (removed in mature form); that stretch reads AGNMPAVAIGGVIAAVAALF.

The protein belongs to the RBT5 family. Interacts with PGA7. In terms of processing, the GPI-anchor is attached to the protein in the endoplasmic reticulum and serves to target the protein to the cell surface. There, the glucosamine-inositol phospholipid moiety is cleaved off and the GPI-modified mannoprotein is covalently attached via its lipidless GPI glycan remnant to the 1,6-beta-glucan of the outer cell wall layer. Post-translationally, mannosylated.

The protein localises to the secreted. It localises to the cell wall. The protein resides in the cell membrane. GPI-linked hyphal surface heme-binding protein involved in heme-iron utilization. Heme transfer occurs between PGA7, RBT5 and CSA2 supporting a model in which the 3 CFEM proteins cooperate in a heme-acquisition system and form a cross-cell wall heme-transfer cascade. The ability to acquire iron from host tissues is a major virulence factor of pathogenic microorganisms. Required for biofilm formation. The sequence is that of GPI-anchored hemophore RBT5 from Candida albicans (strain SC5314 / ATCC MYA-2876) (Yeast).